Reading from the N-terminus, the 31-residue chain is Cytochrome b6-f complex subunit 6 (31 aa).

A helical membrane pass occupies residues 4 to 24 (ITSYFGFLLAALTITSALFIG).

This sequence belongs to the PetL family. As to quaternary structure, the 4 large subunits of the cytochrome b6-f complex are cytochrome b6, subunit IV (17 kDa polypeptide, PetD), cytochrome f and the Rieske protein, while the 4 small subunits are PetG, PetL, PetM and PetN. The complex functions as a dimer.

Its subcellular location is the plastid. It localises to the chloroplast thylakoid membrane. Functionally, component of the cytochrome b6-f complex, which mediates electron transfer between photosystem II (PSII) and photosystem I (PSI), cyclic electron flow around PSI, and state transitions. PetL is important for photoautotrophic growth as well as for electron transfer efficiency and stability of the cytochrome b6-f complex. The polypeptide is Cytochrome b6-f complex subunit 6 (Citrus sinensis (Sweet orange)).